Here is an 861-residue protein sequence, read N- to C-terminus: DNA mismatch repair protein MutS (861 aa).

616–623 (GPNMGGKS) is an ATP binding site.

It belongs to the DNA mismatch repair MutS family.

This protein is involved in the repair of mismatches in DNA. It is possible that it carries out the mismatch recognition step. This protein has a weak ATPase activity. In Haemophilus influenzae (strain 86-028NP), this protein is DNA mismatch repair protein MutS.